The following is a 545-amino-acid chain: Chaperonin GroEL (545 aa).

Residues Thr-29–Pro-32, Lys-50, Asp-86–Thr-90, Gly-414, Asp-477–Ala-479, and Asp-493 contribute to the ATP site.

This sequence belongs to the chaperonin (HSP60) family. As to quaternary structure, forms a cylinder of 14 subunits composed of two heptameric rings stacked back-to-back. Interacts with the co-chaperonin GroES.

It localises to the cytoplasm. The enzyme catalyses ATP + H2O + a folded polypeptide = ADP + phosphate + an unfolded polypeptide.. Its function is as follows. Together with its co-chaperonin GroES, plays an essential role in assisting protein folding. The GroEL-GroES system forms a nano-cage that allows encapsulation of the non-native substrate proteins and provides a physical environment optimized to promote and accelerate protein folding. The chain is Chaperonin GroEL from Campylobacter jejuni subsp. jejuni serotype O:6 (strain 81116 / NCTC 11828).